Reading from the N-terminus, the 216-residue chain is UPF0502 protein Smal_0052 (216 aa).

This sequence belongs to the UPF0502 family.

In Stenotrophomonas maltophilia (strain R551-3), this protein is UPF0502 protein Smal_0052.